Consider the following 436-residue polypeptide: Prenyltransferase nscD (436 aa).

It belongs to the tryptophan dimethylallyltransferase family.

Its pathway is secondary metabolite biosynthesis. Functionally, prenyltransferase; part of the gene cluster that mediates the biosynthesis of neosartoricin B, a prenylated anthracenone that probably exhibits T-cell antiproliferative activity, suggestive of a physiological role as an immunosuppressive agent. The non-reducing polyketide synthase nscA probably synthesizes and cyclizes the decaketide backbone. The hydrolase nscB then mediates the product release through hydrolysis followed by spontaneous decarboxylation. The prenyltransferase nscD catalyzes the addition of the dimethylallyl group to the aromatic C5. The FAD-dependent monooxygenase nscC is then responsible for the stereospecific hydroxylation at C2. Neosartoricin B can be converted into two additional compounds neosartoricins C and D. Neosartoricin C is a spirocyclic compound that is cyclized through the attack of C3 hydroxyl on C14, followed by dehydration. On the other hand, neosartoricin D is a further cyclized compound in which attack of C2 on C14 in neosartoricin C results in the formation of the acetal-containing dioxabicyclo-octanone ring. Both of these compounds are novel and possibly represent related metabolites of the gene cluster. This chain is Prenyltransferase nscD, found in Trichophyton equinum (strain ATCC MYA-4606 / CBS 127.97) (Horse ringworm fungus).